The sequence spans 475 residues: Gelsolin-like protein 1 (475 aa).

Residues 1-131 (MGGTSLDPAL…GYRHVDDQFK (131 aa)) are actin binding, actin severing, Ca-sensitive. The segment at 1-239 (MGGTSLDPAL…VRKVSKGKDD (239 aa)) is necessary for barbed end capping activity. The Gelsolin-like 1 repeat unit spans residues 27 to 105 (FVLEPVPEVD…IQNYESPLFL (79 aa)). The segment at 70 to 73 (DEIG) is actin-actin interfilament contact point. Residues 106-147 (SYFPDGIRYVSGGYESGYRHVDDQFKNWKPHLFHCKGKRNVR) form a required for synapse elimination during development region. The interval 133-227 (WKPHLFHCKG…STFWSYFGGV (95 aa)) is required for phosphatidylinositol 4,5-bisphosphate binding and regulation. 3 Gelsolin-like repeats span residues 148–208 (CTEV…KVHI), 275–341 (RKEQ…STQF), and 375–447 (EIAN…PPTF). Residues 240-475 (DDNYWKRLTE…VQNMRRLLFH (236 aa)) form an F- and G-actin binding, Ca-independent region. The tract at residues 248 to 348 (TEQITLWKVS…TQFTQWFRDW (101 aa)) is inhibitory for phosphatidylinositol 4,5-bisphosphate binding activity.

The protein belongs to the villin/gelsolin family. Monomer. Binds to actin monomers and filaments. Cleavage by caspase ced-3 activates its actin-severing function and is required for the elimination of presynaptic components during development.

The protein resides in the cytoplasm. Its subcellular location is the cytoskeleton. In terms of biological role, calcium-regulated, actin-modulating protein that binds to the plus (or barbed) ends of actin monomers or filaments, preventing monomer exchange (end-blocking or capping). Binds actin but does not nucleate actin polymerization, albeit slows down elongation by blocking the barbed ends. By promoting actin depolymerization, required for the elimination of presynaptic components downstream of the egl-1, ced-4 and ced-3 apoptotic pathway during larval development. The sequence is that of Gelsolin-like protein 1 from Caenorhabditis elegans.